A 117-amino-acid polypeptide reads, in one-letter code: Big defensin (117 aa).

The signal sequence occupies residues 1–23 (MKGNIGIAVFYMLLLLLPTDSIG). A propeptide spanning residues 26–36 (MEEEQEKLFRQ) is cleaved from the precursor. Intrachain disulfides connect Cys-83/Cys-113, Cys-90/Cys-108, and Cys-94/Cys-114.

It belongs to the big defensin family. As to quaternary structure, interacts with intracellular coagulation inhibitor 1/LICI-1. As to expression, expressed in all tissues examined, including hemocytes, heart, hepatopancreas, stomach, intestine and skeletal muscle.

The protein localises to the secreted. Its function is as follows. Significantly inhibits the growth of Gram-negative and Gram-positive bacteria and fungi in vitro. In Tachypleus tridentatus (Japanese horseshoe crab), this protein is Big defensin.